The primary structure comprises 693 residues: Sulfite reductase 1 [ferredoxin], chloroplastic (693 aa).

The N-terminal 62 residues, 1–62, are a transit peptide targeting the chloroplast; sequence MTTSFGAAIN…PSSIVRAVST (62 aa). [4Fe-4S] cluster is bound by residues Cys502, Cys508, Cys548, and Cys552. Cys552 is a binding site for siroheme.

This sequence belongs to the nitrite and sulfite reductase 4Fe-4S domain family. In terms of assembly, monomer. Interacts with ferredoxin. The cofactor is siroheme. [4Fe-4S] cluster serves as cofactor. In terms of processing, phosphorylated; this phosphorylation reduces DNA-binding. As to expression, expressed in leaves, stems, roots and petals.

The protein resides in the plastid. It localises to the chloroplast stroma. The protein localises to the chloroplast nucleoid. It is found in the plastid stroma. It catalyses the reaction hydrogen sulfide + 6 oxidized [2Fe-2S]-[ferredoxin] + 3 H2O = sulfite + 6 reduced [2Fe-2S]-[ferredoxin] + 7 H(+). In terms of biological role, essential protein with sulfite reductase activity required in assimilatory sulfate reduction pathway during both primary and secondary metabolism and thus involved in development and growth. Its function is as follows. DNA-binding protein that binds to both double-stranded and single-stranded DNA without significant sequence specificity to reversibly repress the transcriptional activity of chloroplast nucleoids by promoting DNA compaction and possibly regulate DNA replication. The protein is Sulfite reductase 1 [ferredoxin], chloroplastic (SIR1) of Nicotiana tabacum (Common tobacco).